The sequence spans 525 residues: GMP synthase [glutamine-hydrolyzing] (525 aa).

In terms of domain architecture, Glutamine amidotransferase type-1 spans 9 to 207 (RILILDFGSQ…VLEISGCEAL (199 aa)). Catalysis depends on cysteine 86, which acts as the Nucleophile. Residues histidine 181 and glutamate 183 contribute to the active site. One can recognise a GMPS ATP-PPase domain in the interval 208-400 (WTPANIVEDA…LGLPYDMVYR (193 aa)). Residue 235–241 (SGGVDSS) coordinates ATP.

Homodimer.

It carries out the reaction XMP + L-glutamine + ATP + H2O = GMP + L-glutamate + AMP + diphosphate + 2 H(+). It participates in purine metabolism; GMP biosynthesis; GMP from XMP (L-Gln route): step 1/1. Functionally, catalyzes the synthesis of GMP from XMP. The polypeptide is GMP synthase [glutamine-hydrolyzing] (Ectopseudomonas mendocina (strain ymp) (Pseudomonas mendocina)).